The sequence spans 279 residues: Urease accessory protein UreD (279 aa).

Belongs to the UreD family. As to quaternary structure, ureD, UreF and UreG form a complex that acts as a GTP-hydrolysis-dependent molecular chaperone, activating the urease apoprotein by helping to assemble the nickel containing metallocenter of UreC. The UreE protein probably delivers the nickel.

Its subcellular location is the cytoplasm. Required for maturation of urease via the functional incorporation of the urease nickel metallocenter. This chain is Urease accessory protein UreD, found in Trichodesmium erythraeum (strain IMS101).